Consider the following 694-residue polypeptide: MMAAAAGEGEAEVTREVISVSTEKAFEGKALPAWSEQITVRSLVVSAVLGTFLSFIVMKLNLTSGIVPSLNVSAGLLAFFLMKTWTSALERCGVFPKPFTRQENTVVQTCVISCSSIAFSGGFGTYILGMSKKIAEGFDEAEAKTSINVEEPSLGRLIAFLFLVSFVGLFSIVPLRKIMIISYKLTYPSGSATAHLINSFHTPQGAIQAKHQVSILFKSFVGSFLWSLFQWFYAAGPGCGFSSFPTFGMVAYSRRFYFDFSATYVGVGMICPYIINFSLLIGSVVSWGIMWPYIESKKGSWYDAGLPKSSLHGLNGYQVFISIAMIVGDGLFNFFSIVLRTAYDLYLKRRGGASKQPQETPFAGATGTERQVLSFDDRRRTQVFLKDQIPTTIAAAAYVLLAAISVVAIPHIFRQLRPKHVVWAYVVAPLFAFCNAYGTGLTDWSLSSSYGKLAIFIFGANIGAKDGGVVAGLAACGLMMGIVSTASDLVQDFKTGYLTLTSPRSMFVSQVLGTGMGCIISPMVFWMFYKANNIGMEEGFPAPYAKIYRGIALLGVNGWDQLPRYCLRFCLAFFLLAIAICALKEVAKQRGWWIQDFIPSALGMAVPFFLGSFFTIDMCVGSLVLFLWSRSDPVRAHTFAPAVASGLICGDGIWSLPSSILSLANVNPPMCMRVFSTATNDKVQLFLRTLPTPP.

Helical transmembrane passes span Ile-38–Met-58, Leu-62–Met-82, Cys-110–Met-130, Leu-154–Pro-174, Ile-215–Ala-235, Val-265–Val-285, Val-319–Leu-339, Ile-393–Phe-413, Val-421–Leu-441, Gly-467–Ser-487, Met-506–Trp-526, Leu-567–Ala-587, Phe-608–Trp-628, and Val-643–Leu-663.

The protein belongs to the YSL (TC 2.A.67.2) family. As to expression, expressed in root epidermis and exoderm.

It is found in the membrane. Its function is as follows. May be involved in the transport of nicotianamine-chelated metals. The sequence is that of Probable metal-nicotianamine transporter YSL8 (YSL8) from Oryza sativa subsp. japonica (Rice).